The chain runs to 341 residues: ATP synthase subunit a 2 (341 aa).

A signal peptide spans 1-33 (MKRVKVIQIKGFFRVMALLAPLLLNAYLPVQAS). 6 helical membrane passes run 112–132 (VVML…VGAA), 173–193 (LPYL…GLIP), 195–215 (GATA…TFFI), 242–262 (WIIM…ALTV), 273–293 (IVIL…VAAA), and 307–327 (IFVA…FIGL).

Belongs to the ATPase A chain family. As to quaternary structure, F-type ATPases have 2 components, CF(1) - the catalytic core - and CF(0) - the membrane proton channel. CF(1) has five subunits: alpha(3), beta(3), gamma(1), delta(1), epsilon(1). CF(0) has four main subunits: a, b, b' and c.

Its subcellular location is the cell inner membrane. Key component of the proton channel; it plays a direct role in the translocation of protons across the membrane. The protein is ATP synthase subunit a 2 of Chlorobium luteolum (strain DSM 273 / BCRC 81028 / 2530) (Pelodictyon luteolum).